A 504-amino-acid polypeptide reads, in one-letter code: Lysine--tRNA ligase (504 aa).

Positions 411 and 418 each coordinate Mg(2+).

It belongs to the class-II aminoacyl-tRNA synthetase family. Homodimer. It depends on Mg(2+) as a cofactor.

The protein localises to the cytoplasm. The catalysed reaction is tRNA(Lys) + L-lysine + ATP = L-lysyl-tRNA(Lys) + AMP + diphosphate. This chain is Lysine--tRNA ligase, found in Clostridium botulinum (strain Okra / Type B1).